The chain runs to 81 residues: Acyl carrier protein (81 aa).

Residues 2–77 (ASVEEKVKQI…DAVDYITAHA (76 aa)) form the Carrier domain. S37 carries the O-(pantetheine 4'-phosphoryl)serine modification.

This sequence belongs to the acyl carrier protein (ACP) family. In terms of processing, 4'-phosphopantetheine is transferred from CoA to a specific serine of apo-ACP by AcpS. This modification is essential for activity because fatty acids are bound in thioester linkage to the sulfhydryl of the prosthetic group.

It localises to the cytoplasm. Its pathway is lipid metabolism; fatty acid biosynthesis. Carrier of the growing fatty acid chain in fatty acid biosynthesis. The protein is Acyl carrier protein of Koribacter versatilis (strain Ellin345).